The sequence spans 106 residues: Nucleoid-associated protein BRADO0764 (106 aa).

This sequence belongs to the YbaB/EbfC family. Homodimer.

It is found in the cytoplasm. It localises to the nucleoid. Its function is as follows. Binds to DNA and alters its conformation. May be involved in regulation of gene expression, nucleoid organization and DNA protection. The polypeptide is Nucleoid-associated protein BRADO0764 (Bradyrhizobium sp. (strain ORS 278)).